A 576-amino-acid polypeptide reads, in one-letter code: Glutamine-dependent NAD(+) synthetase (576 aa).

Residues 4 to 246 form the CN hydrolase domain; sequence LRVTLAQLNP…EEIITVDLDL (243 aa). Glu44 (proton acceptor; for glutaminase activity) is an active-site residue. Lys112 acts as the For glutaminase activity in catalysis. Tyr118 is a binding site for L-glutamine. The active-site Nucleophile; for glutaminase activity is the Cys148. Residues Ser176 and Lys182 each coordinate L-glutamine. The segment at 292 to 576 is ligase; that stretch reads PVREEEMFRA…PITNRFKEPL (285 aa). Residue 321 to 328 coordinates ATP; it reads GLSGGMDS. Asn404 is a deamido-NAD(+) binding site. Thr428 is a binding site for ATP. Residues Glu433 and Lys545 each coordinate deamido-NAD(+).

The protein in the C-terminal section; belongs to the NAD synthetase family.

The enzyme catalyses deamido-NAD(+) + L-glutamine + ATP + H2O = L-glutamate + AMP + diphosphate + NAD(+) + H(+). It participates in cofactor biosynthesis; NAD(+) biosynthesis; NAD(+) from deamido-NAD(+) (L-Gln route): step 1/1. Catalyzes the ATP-dependent amidation of deamido-NAD to form NAD. Uses L-glutamine as a nitrogen source. This Thermotoga maritima (strain ATCC 43589 / DSM 3109 / JCM 10099 / NBRC 100826 / MSB8) protein is Glutamine-dependent NAD(+) synthetase (nadE2).